The chain runs to 371 residues: Dual-specificity RNA methyltransferase RlmN (371 aa).

Glutamate 99 serves as the catalytic Proton acceptor. Positions aspartate 106–aspartate 333 constitute a Radical SAM core domain. An intrachain disulfide couples cysteine 113 to cysteine 338. [4Fe-4S] cluster contacts are provided by cysteine 120, cysteine 124, and cysteine 127. S-adenosyl-L-methionine is bound by residues glycine 165 to glutamate 166, serine 197, serine 219 to asparagine 221, and asparagine 295. The active-site S-methylcysteine intermediate is the cysteine 338. The segment at leucine 345–leucine 371 is disordered. Basic and acidic residues predominate over residues glutamate 353–glutamine 365.

The protein belongs to the radical SAM superfamily. RlmN family. Requires [4Fe-4S] cluster as cofactor.

Its subcellular location is the cytoplasm. The enzyme catalyses adenosine(2503) in 23S rRNA + 2 reduced [2Fe-2S]-[ferredoxin] + 2 S-adenosyl-L-methionine = 2-methyladenosine(2503) in 23S rRNA + 5'-deoxyadenosine + L-methionine + 2 oxidized [2Fe-2S]-[ferredoxin] + S-adenosyl-L-homocysteine. It carries out the reaction adenosine(37) in tRNA + 2 reduced [2Fe-2S]-[ferredoxin] + 2 S-adenosyl-L-methionine = 2-methyladenosine(37) in tRNA + 5'-deoxyadenosine + L-methionine + 2 oxidized [2Fe-2S]-[ferredoxin] + S-adenosyl-L-homocysteine. Its function is as follows. Specifically methylates position 2 of adenine 2503 in 23S rRNA and position 2 of adenine 37 in tRNAs. m2A2503 modification seems to play a crucial role in the proofreading step occurring at the peptidyl transferase center and thus would serve to optimize ribosomal fidelity. The chain is Dual-specificity RNA methyltransferase RlmN from Syntrophotalea carbinolica (strain DSM 2380 / NBRC 103641 / GraBd1) (Pelobacter carbinolicus).